The sequence spans 124 residues: Small ribosomal subunit protein uS12 (124 aa).

3-methylthioaspartic acid is present on Asp-89.

The protein belongs to the universal ribosomal protein uS12 family. In terms of assembly, part of the 30S ribosomal subunit. Contacts proteins S8 and S17. May interact with IF1 in the 30S initiation complex.

In terms of biological role, with S4 and S5 plays an important role in translational accuracy. Functionally, interacts with and stabilizes bases of the 16S rRNA that are involved in tRNA selection in the A site and with the mRNA backbone. Located at the interface of the 30S and 50S subunits, it traverses the body of the 30S subunit contacting proteins on the other side and probably holding the rRNA structure together. The combined cluster of proteins S8, S12 and S17 appears to hold together the shoulder and platform of the 30S subunit. The polypeptide is Small ribosomal subunit protein uS12 (Shewanella putrefaciens (strain CN-32 / ATCC BAA-453)).